We begin with the raw amino-acid sequence, 162 residues long: D-aminoacyl-tRNA deacylase (162 aa).

The short motif at 145-146 (GP) is the Gly-cisPro motif, important for rejection of L-amino acids element.

Belongs to the DTD family. Homodimer.

The protein resides in the cytoplasm. It catalyses the reaction glycyl-tRNA(Ala) + H2O = tRNA(Ala) + glycine + H(+). The enzyme catalyses a D-aminoacyl-tRNA + H2O = a tRNA + a D-alpha-amino acid + H(+). An aminoacyl-tRNA editing enzyme that deacylates mischarged D-aminoacyl-tRNAs. Also deacylates mischarged glycyl-tRNA(Ala), protecting cells against glycine mischarging by AlaRS. Acts via tRNA-based rather than protein-based catalysis; rejects L-amino acids rather than detecting D-amino acids in the active site. By recycling D-aminoacyl-tRNA to D-amino acids and free tRNA molecules, this enzyme counteracts the toxicity associated with the formation of D-aminoacyl-tRNA entities in vivo and helps enforce protein L-homochirality. The chain is D-aminoacyl-tRNA deacylase from Bifidobacterium longum (strain NCC 2705).